Reading from the N-terminus, the 187-residue chain is Intraflagellar transport protein 22 homolog (187 aa).

GTP-binding positions include 10–17, 65–69, and 125–128; these read GPSECGKT, DCAGD, and HKPG.

Belongs to the small GTPase superfamily. Rab family.

This chain is Intraflagellar transport protein 22 homolog (ift22), found in Danio rerio (Zebrafish).